Here is a 447-residue protein sequence, read N- to C-terminus: Cobyrinate a,c-diamide synthase (447 aa).

A GATase cobBQ-type domain is found at 252 to 439; the sequence is KIAVAFDESF…AHQHCIGNPY (188 aa). C331 functions as the Nucleophile in the catalytic mechanism.

This sequence belongs to the CobB/CbiA family. Requires Mg(2+) as cofactor.

It catalyses the reaction cob(II)yrinate + 2 L-glutamine + 2 ATP + 2 H2O = cob(II)yrinate a,c diamide + 2 L-glutamate + 2 ADP + 2 phosphate + 2 H(+). The catalysed reaction is Ni-sirohydrochlorin + 2 L-glutamine + 2 ATP + 2 H2O = Ni-sirohydrochlorin a,c-diamide + 2 L-glutamate + 2 ADP + 2 phosphate + 2 H(+). It participates in cofactor biosynthesis; adenosylcobalamin biosynthesis; cob(II)yrinate a,c-diamide from sirohydrochlorin (anaerobic route): step 10/10. Functionally, catalyzes the ATP-dependent amidation of the two carboxylate groups at positions a and c of cobyrinate, using either L-glutamine or ammonia as the nitrogen source. Involved in the biosynthesis of the unique nickel-containing tetrapyrrole coenzyme F430, the prosthetic group of methyl-coenzyme M reductase (MCR), which plays a key role in methanogenesis and anaerobic methane oxidation. Catalyzes the ATP-dependent amidation of the two carboxylate groups at positions a and c of Ni-sirohydrochlorin, using L-glutamine or ammonia as the nitrogen source. The protein is Cobyrinate a,c-diamide synthase of Methanococcus maripaludis (strain C5 / ATCC BAA-1333).